We begin with the raw amino-acid sequence, 95 residues long: Protein TusB (95 aa).

It belongs to the DsrH/TusB family. As to quaternary structure, heterohexamer, formed by a dimer of trimers. The hexameric TusBCD complex contains 2 copies each of TusB, TusC and TusD. The TusBCD complex interacts with TusE.

Its subcellular location is the cytoplasm. Functionally, part of a sulfur-relay system required for 2-thiolation of 5-methylaminomethyl-2-thiouridine (mnm(5)s(2)U) at tRNA wobble positions. In Klebsiella pneumoniae (strain 342), this protein is Protein TusB.